Reading from the N-terminus, the 343-residue chain is 3-isopropylmalate dehydrogenase (343 aa).

Residues Arg-94, Arg-104, Arg-128, and Asp-218 each contribute to the substrate site. The Mg(2+) site is built by Asp-218, Asp-242, and Asp-246. 278–290 (GSAPDIAGQNKAN) contributes to the NAD(+) binding site.

The protein belongs to the isocitrate and isopropylmalate dehydrogenases family. LeuB type 2 subfamily. As to quaternary structure, homodimer. Mg(2+) is required as a cofactor. Requires Mn(2+) as cofactor.

The protein resides in the cytoplasm. The catalysed reaction is (2R,3S)-3-isopropylmalate + NAD(+) = 4-methyl-2-oxopentanoate + CO2 + NADH. The protein operates within amino-acid biosynthesis; L-leucine biosynthesis; L-leucine from 3-methyl-2-oxobutanoate: step 3/4. In terms of biological role, catalyzes the oxidation of 3-carboxy-2-hydroxy-4-methylpentanoate (3-isopropylmalate) to 3-carboxy-4-methyl-2-oxopentanoate. The product decarboxylates to 4-methyl-2 oxopentanoate. The polypeptide is 3-isopropylmalate dehydrogenase (Bifidobacterium longum subsp. infantis (strain ATCC 15697 / DSM 20088 / JCM 1222 / NCTC 11817 / S12)).